A 68-amino-acid chain; its full sequence is Large ribosomal subunit protein bL35 (68 aa).

The protein belongs to the bacterial ribosomal protein bL35 family.

This Rickettsia felis (strain ATCC VR-1525 / URRWXCal2) (Rickettsia azadi) protein is Large ribosomal subunit protein bL35.